Consider the following 732-residue polypeptide: Polyribonucleotide nucleotidyltransferase (732 aa).

Residues Asp503 and Asp509 each coordinate Mg(2+). The region spanning 570–629 (PRLTAIQVPVESIGLIIGKGGETIRSITEETGAEINIEDDGTVTIACSSNEGTKGAVEII) is the KH domain. Residues 639–713 (GTVYIGKVRD…GKTRFALSIK (75 aa)) form the S1 motif domain.

It belongs to the polyribonucleotide nucleotidyltransferase family. Requires Mg(2+) as cofactor.

The protein localises to the cytoplasm. It catalyses the reaction RNA(n+1) + phosphate = RNA(n) + a ribonucleoside 5'-diphosphate. Its function is as follows. Involved in mRNA degradation. Catalyzes the phosphorolysis of single-stranded polyribonucleotides processively in the 3'- to 5'-direction. The polypeptide is Polyribonucleotide nucleotidyltransferase (Chlorobium phaeovibrioides (strain DSM 265 / 1930) (Prosthecochloris vibrioformis (strain DSM 265))).